The primary structure comprises 261 residues: Carboxy-terminal domain RNA polymerase II polypeptide A small phosphatase 1 (261 aa).

Met1 bears the N-acetylmethionine mark. Over residues 1–10 (MDSSAVITQI) the composition is skewed to polar residues. Residues 1–33 (MDSSAVITQISKEEARGPLRGKGDQKSAASQKP) are disordered. Residues 11 to 25 (SKEEARGPLRGKGDQ) show a composition bias toward basic and acidic residues. The 159-residue stretch at 86–244 (QDSDKICVVI…HDLLPFFEQL (159 aa)) folds into the FCP1 homology domain. The active-site 4-aspartylphosphate intermediate is the Asp96. Asp96, Asp98, and Asn207 together coordinate Mg(2+). Catalysis depends on Asp98, which acts as the Proton donor.

In terms of assembly, monomer. Interacts with GTF2F1. Interacts with REST. Mg(2+) serves as cofactor. As to expression, expression is restricted to non-neuronal tissues. Highest expression in skeletal muscle, spleen, lung and placenta.

It localises to the nucleus. The enzyme catalyses O-phospho-L-seryl-[protein] + H2O = L-seryl-[protein] + phosphate. The catalysed reaction is O-phospho-L-threonyl-[protein] + H2O = L-threonyl-[protein] + phosphate. Its activity is regulated as follows. Stimulated by GTF2F1. Inhibited by beryllofluoride anions. Functionally, preferentially catalyzes the dephosphorylation of 'Ser-5' within the tandem 7 residue repeats in the C-terminal domain (CTD) of the largest RNA polymerase II subunit POLR2A. Negatively regulates RNA polymerase II transcription, possibly by controlling the transition from initiation/capping to processive transcript elongation. Recruited by REST to neuronal genes that contain RE-1 elements, leading to neuronal gene silencing in non-neuronal cells. This is Carboxy-terminal domain RNA polymerase II polypeptide A small phosphatase 1 (CTDSP1) from Homo sapiens (Human).